Here is a 202-residue protein sequence, read N- to C-terminus: Small ribosomal subunit protein uS4c (202 aa).

An S4 RNA-binding domain is found at 90 to 154 (MRLDNIIFRL…SQSIIIKNLN (65 aa)).

The protein belongs to the universal ribosomal protein uS4 family. In terms of assembly, part of the 30S ribosomal subunit. Contacts protein S5. The interaction surface between S4 and S5 is involved in control of translational fidelity.

It localises to the plastid. Its subcellular location is the chloroplast. Functionally, one of the primary rRNA binding proteins, it binds directly to 16S rRNA where it nucleates assembly of the body of the 30S subunit. With S5 and S12 plays an important role in translational accuracy. In Marchantia polymorpha (Common liverwort), this protein is Small ribosomal subunit protein uS4c (rps4).